Consider the following 251-residue polypeptide: Probable transcriptional regulatory protein Cpar_0525 (251 aa).

The protein belongs to the TACO1 family.

It localises to the cytoplasm. This is Probable transcriptional regulatory protein Cpar_0525 from Chlorobaculum parvum (strain DSM 263 / NCIMB 8327) (Chlorobium vibrioforme subsp. thiosulfatophilum).